We begin with the raw amino-acid sequence, 225 residues long: Vacuolar protein sorting-associated protein 2 homolog 1 (225 aa).

Residues Ala-13 to Gln-54 adopt a coiled-coil conformation.

It belongs to the SNF7 family. As to quaternary structure, component of the endosomal sorting required for transport complex III (ESCRT-III), composed at least of VPS2, VPS20, VPS24 and VPS32. Interacts with SKD1.

Its subcellular location is the endosome. Component of the ESCRT-III complex, which is required for multivesicular bodies (MVBs) formation and sorting of endosomal cargo proteins into MVBs. The ESCRT-III complex is probably involved in the concentration of MVB cargo. In Arabidopsis thaliana (Mouse-ear cress), this protein is Vacuolar protein sorting-associated protein 2 homolog 1 (VPS2.1).